A 503-amino-acid chain; its full sequence is Glutamyl-tRNA(Gln) amidotransferase subunit A (503 aa).

Catalysis depends on charge relay system residues Lys-79 and Ser-154. Catalysis depends on Ser-178, which acts as the Acyl-ester intermediate.

This sequence belongs to the amidase family. GatA subfamily. As to quaternary structure, heterotrimer of A, B and C subunits.

It carries out the reaction L-glutamyl-tRNA(Gln) + L-glutamine + ATP + H2O = L-glutaminyl-tRNA(Gln) + L-glutamate + ADP + phosphate + H(+). In terms of biological role, allows the formation of correctly charged Gln-tRNA(Gln) through the transamidation of misacylated Glu-tRNA(Gln) in organisms which lack glutaminyl-tRNA synthetase. The reaction takes place in the presence of glutamine and ATP through an activated gamma-phospho-Glu-tRNA(Gln). The sequence is that of Glutamyl-tRNA(Gln) amidotransferase subunit A from Agathobacter rectalis (strain ATCC 33656 / DSM 3377 / JCM 17463 / KCTC 5835 / VPI 0990) (Eubacterium rectale).